The sequence spans 205 residues: Imidazoleglycerol-phosphate dehydratase (205 aa).

A disordered region spans residues 1-27 (MKQASPRAGGAKARRGQVARKTKETDV).

It belongs to the imidazoleglycerol-phosphate dehydratase family.

The protein resides in the cytoplasm. It carries out the reaction D-erythro-1-(imidazol-4-yl)glycerol 3-phosphate = 3-(imidazol-4-yl)-2-oxopropyl phosphate + H2O. It functions in the pathway amino-acid biosynthesis; L-histidine biosynthesis; L-histidine from 5-phospho-alpha-D-ribose 1-diphosphate: step 6/9. This Anaeromyxobacter sp. (strain Fw109-5) protein is Imidazoleglycerol-phosphate dehydratase.